The sequence spans 415 residues: uncharacterized protein (415 aa).

Residues C276 and C316 each contribute to the [4Fe-4S] cluster site.

Homodimer. [4Fe-4S] cluster is required as a cofactor.

This is an uncharacterized protein from Methanocaldococcus jannaschii (strain ATCC 43067 / DSM 2661 / JAL-1 / JCM 10045 / NBRC 100440) (Methanococcus jannaschii).